A 573-amino-acid polypeptide reads, in one-letter code: 2-succinyl-5-enolpyruvyl-6-hydroxy-3-cyclohexene-1-carboxylate synthase (573 aa).

Belongs to the TPP enzyme family. MenD subfamily. Homodimer. The cofactor is Mg(2+). It depends on Mn(2+) as a cofactor. Thiamine diphosphate serves as cofactor.

It carries out the reaction isochorismate + 2-oxoglutarate + H(+) = 5-enolpyruvoyl-6-hydroxy-2-succinyl-cyclohex-3-ene-1-carboxylate + CO2. It functions in the pathway quinol/quinone metabolism; 1,4-dihydroxy-2-naphthoate biosynthesis; 1,4-dihydroxy-2-naphthoate from chorismate: step 2/7. The protein operates within quinol/quinone metabolism; menaquinone biosynthesis. Its function is as follows. Catalyzes the thiamine diphosphate-dependent decarboxylation of 2-oxoglutarate and the subsequent addition of the resulting succinic semialdehyde-thiamine pyrophosphate anion to isochorismate to yield 2-succinyl-5-enolpyruvyl-6-hydroxy-3-cyclohexene-1-carboxylate (SEPHCHC). This Shewanella sp. (strain ANA-3) protein is 2-succinyl-5-enolpyruvyl-6-hydroxy-3-cyclohexene-1-carboxylate synthase.